A 668-amino-acid chain; its full sequence is Hemocyanin subunit D (668 aa).

The signal sequence occupies residues 1–22 (MDTRVLRLTLALVALSGVLADS). 3 residues coordinate Cu cation: His-206, His-210, and His-236. Asn-322 is a glycosylation site (N-linked (GlcNAc...) asparagine). Residues His-357, His-361, and His-397 each coordinate Cu cation. A disulfide bridge links Cys-567 with Cys-614.

Belongs to the tyrosinase family. Hemocyanin subfamily. As to quaternary structure, 36-chain polymer consisting of 6 hexamers, each of which includes 4 different chains, A, B, C and D. In terms of tissue distribution, hemolymph.

It is found in the secreted. It localises to the extracellular space. Functionally, hemocyanins are copper-containing oxygen carriers occurring freely dissolved in the hemolymph of many mollusks and arthropods. The chain is Hemocyanin subunit D (HCD) from Scutigera coleoptrata (House centipede).